Consider the following 1062-residue polypeptide: SLIT-ROBO Rho GTPase-activating protein 1 (1062 aa).

Residues Ser-19–Asp-314 enclose the F-BAR domain. A coiled-coil region spans residues Gln-352 to Ala-382. Position 416 is a phosphoserine (Ser-416). Positions Gly-481–Phe-671 constitute a Rho-GAP domain. Residues Cys-720–Met-779 enclose the SH3 domain. Over residues Asp-785–Pro-799 the composition is skewed to polar residues. The segment at Asp-785–Asp-931 is disordered. Ser-812 and Ser-894 each carry phosphoserine. Positions Ser-899 to Asp-908 are enriched in basic and acidic residues. Ser-909 bears the Phosphoserine mark. Residues Arg-914 to Gly-923 are compositionally biased toward polar residues. Residues Glu-933–Lys-960 are a coiled coil. The span at Lys-974–Pro-988 shows a compositional bias: polar residues. 2 disordered regions span residues Lys-974 to Ser-1013 and Lys-1028 to Met-1062. Phosphoserine is present on Ser-976. A Phosphothreonine modification is found at Thr-978. A compositionally biased stretch (low complexity) spans Ser-1004 to Ser-1013. Ser-1009 is subject to Phosphoserine. The segment covering Gln-1053–Met-1062 has biased composition (polar residues).

Homodimer. Forms a heterooligomer with SRGAP2 and SRGAP3 through its F-BAR domain. Interacts with CDC42 and RHOA. Interacts with FASLG. Interacts (via SH3 domain) with ROBO1.

GTPase-activating protein for RhoA and Cdc42 small GTPases. Together with CDC42 seems to be involved in the pathway mediating the repulsive signaling of Robo and Slit proteins in neuronal migration. SLIT2, probably through interaction with ROBO1, increases the interaction of SRGAP1 with ROBO1 and inactivates CDC42. The sequence is that of SLIT-ROBO Rho GTPase-activating protein 1 (Srgap1) from Mus musculus (Mouse).